Reading from the N-terminus, the 264-residue chain is 3-methyl-2-oxobutanoate hydroxymethyltransferase 1 (264 aa).

The Mg(2+) site is built by Asp-45 and Asp-84. 3-methyl-2-oxobutanoate-binding positions include 45-46 (DS), Asp-84, and Lys-112. Residue Glu-114 coordinates Mg(2+). Glu-181 (proton acceptor) is an active-site residue.

Belongs to the PanB family. As to quaternary structure, homodecamer; pentamer of dimers. It depends on Mg(2+) as a cofactor.

It is found in the cytoplasm. It carries out the reaction 3-methyl-2-oxobutanoate + (6R)-5,10-methylene-5,6,7,8-tetrahydrofolate + H2O = 2-dehydropantoate + (6S)-5,6,7,8-tetrahydrofolate. It functions in the pathway cofactor biosynthesis; (R)-pantothenate biosynthesis; (R)-pantoate from 3-methyl-2-oxobutanoate: step 1/2. Catalyzes the reversible reaction in which hydroxymethyl group from 5,10-methylenetetrahydrofolate is transferred onto alpha-ketoisovalerate to form ketopantoate. This is 3-methyl-2-oxobutanoate hydroxymethyltransferase 1 from Aliivibrio fischeri (strain ATCC 700601 / ES114) (Vibrio fischeri).